The following is a 450-amino-acid chain: Tubulin alpha-1 chain (450 aa).

A GTP-binding site is contributed by glutamine 11. At lysine 40 the chain carries N6-acetyllysine. The GTP site is built by glutamate 71, serine 140, glycine 144, threonine 145, threonine 179, asparagine 206, and asparagine 228. Glutamate 71 lines the Mg(2+) pocket. Residue glutamate 254 is part of the active site.

Belongs to the tubulin family. In terms of assembly, dimer of alpha and beta chains. A typical microtubule is a hollow water-filled tube with an outer diameter of 25 nm and an inner diameter of 15 nM. Alpha-beta heterodimers associate head-to-tail to form protofilaments running lengthwise along the microtubule wall with the beta-tubulin subunit facing the microtubule plus end conferring a structural polarity. Microtubules usually have 13 protofilaments but different protofilament numbers can be found in some organisms and specialized cells. Interacts with Ote. Requires Mg(2+) as cofactor. In terms of processing, undergoes a tyrosination/detyrosination cycle, the cyclic removal and re-addition of a C-terminal tyrosine residue by the enzymes tubulin tyrosine carboxypeptidase (TTCP) and tubulin tyrosine ligase (TTL), respectively. Acetylation of alpha chains at Lys-40 stabilizes microtubules and affects affinity and processivity of microtubule motors. This modification has a role in multiple cellular functions, ranging from cell motility, cell cycle progression or cell differentiation to intracellular trafficking and signaling. During the early stages of oogenesis lky/Alpha-tubulin N-acetyltransferase 2 is the main acetyltransferase responsible for Lys-40 acetylation in germline cells while Atat/alpha-tubulin N-acetyltransferase 1 is the main acetyltransferase responsible for Lys-40 acetylation in somatic cells.

It is found in the cytoplasm. The protein localises to the cytoskeleton. The catalysed reaction is GTP + H2O = GDP + phosphate + H(+). Its function is as follows. Tubulin is the major constituent of microtubules, a cylinder consisting of laterally associated linear protofilaments composed of alpha- and beta-tubulin heterodimers. Microtubules grow by the addition of GTP-tubulin dimers to the microtubule end, where a stabilizing cap forms. Below the cap, tubulin dimers are in GDP-bound state, owing to GTPase activity of alpha-tubulin. The sequence is that of Tubulin alpha-1 chain (alphaTub84B) from Drosophila melanogaster (Fruit fly).